Consider the following 219-residue polypeptide: Ribosomal RNA small subunit methyltransferase Nep1 (219 aa).

S-adenosyl-L-methionine-binding positions include G178, G183, and 196–201 (LYKAPL).

It belongs to the class IV-like SAM-binding methyltransferase superfamily. RNA methyltransferase NEP1 family. As to quaternary structure, homodimer.

The catalysed reaction is a pseudouridine in rRNA + S-adenosyl-L-methionine = an N(1)-methylpseudouridine in rRNA + S-adenosyl-L-homocysteine + H(+). Its function is as follows. Methyltransferase involved in ribosomal biogenesis. Specifically catalyzes the N1-methylation of the pseudouridine corresponding to position 914 in M.jannaschii 16S rRNA. The sequence is that of Ribosomal RNA small subunit methyltransferase Nep1 from Thermococcus onnurineus (strain NA1).